Reading from the N-terminus, the 34-residue chain is Stromal 70 kDa heat shock-related protein, chloroplastic (34 aa).

Belongs to the heat shock protein 70 family.

The protein localises to the plastid. It localises to the chloroplast stroma. Interacts with newly imported chloroplast proteins to assist in their maturation. The polypeptide is Stromal 70 kDa heat shock-related protein, chloroplastic (Cucurbita maxima (Pumpkin)).